The following is a 414-amino-acid chain: Serine hydroxymethyltransferase (414 aa).

(6S)-5,6,7,8-tetrahydrofolate contacts are provided by residues Leu-121 and 125–127; that span reads GHL. Residue Lys-230 is modified to N6-(pyridoxal phosphate)lysine.

Belongs to the SHMT family. Homodimer. The cofactor is pyridoxal 5'-phosphate.

It is found in the cytoplasm. It carries out the reaction (6R)-5,10-methylene-5,6,7,8-tetrahydrofolate + glycine + H2O = (6S)-5,6,7,8-tetrahydrofolate + L-serine. It participates in one-carbon metabolism; tetrahydrofolate interconversion. Its pathway is amino-acid biosynthesis; glycine biosynthesis; glycine from L-serine: step 1/1. Functionally, catalyzes the reversible interconversion of serine and glycine with tetrahydrofolate (THF) serving as the one-carbon carrier. This reaction serves as the major source of one-carbon groups required for the biosynthesis of purines, thymidylate, methionine, and other important biomolecules. Also exhibits THF-independent aldolase activity toward beta-hydroxyamino acids, producing glycine and aldehydes, via a retro-aldol mechanism. This is Serine hydroxymethyltransferase from Acidithiobacillus ferrooxidans (strain ATCC 23270 / DSM 14882 / CIP 104768 / NCIMB 8455) (Ferrobacillus ferrooxidans (strain ATCC 23270)).